The chain runs to 152 residues: Nucleoside diphosphate kinase (152 aa).

Residues K11, F59, R87, T93, R104, and N114 each coordinate ATP. The active-site Pros-phosphohistidine intermediate is the H117.

This sequence belongs to the NDK family. Homotetramer. Mg(2+) is required as a cofactor.

Its subcellular location is the cytoplasm. The catalysed reaction is a 2'-deoxyribonucleoside 5'-diphosphate + ATP = a 2'-deoxyribonucleoside 5'-triphosphate + ADP. It carries out the reaction a ribonucleoside 5'-diphosphate + ATP = a ribonucleoside 5'-triphosphate + ADP. Major role in the synthesis of nucleoside triphosphates other than ATP. The ATP gamma phosphate is transferred to the NDP beta phosphate via a ping-pong mechanism, using a phosphorylated active-site intermediate. The protein is Nucleoside diphosphate kinase of Prochlorococcus marinus (strain MIT 9515).